Consider the following 482-residue polypeptide: ATP-dependent rRNA helicase rrp3 (482 aa).

The interval 1–55 (MSSVKRRKTEKNTSSGLKSKQAKEPKEASPLSSPEPTEENQNNEIEEGTEEEEVT) is disordered. Over residues 44 to 53 (EIEEGTEEEE) the composition is skewed to acidic residues. The Q motif motif lies at 56–84 (KSFKDLGIVDSLCEACDTLGYKAPTPIQR). One can recognise a Helicase ATP-binding domain in the interval 87–258 (IPLALQGRDL…RASLKDPLRV (172 aa)). Residue 100 to 107 (AETGSGKT) participates in ATP binding. Positions 206–209 (DEAD) match the DEAD box motif. The 149-residue stretch at 282-430 (HKDTYLIYLL…EYQTVKDEVM (149 aa)) folds into the Helicase C-terminal domain. 2 stretches are compositionally biased toward basic and acidic residues: residues 444–456 (RNEM…DRGK) and 472–482 (RGRDEMDREEG). A disordered region spans residues 444–482 (RNEMKNLHEDRGKKGAVLKGRRPANGAKRGRDEMDREEG).

Belongs to the DEAD box helicase family. DDX47/RRP3 subfamily. In terms of assembly, interacts with the SSU processome.

The protein localises to the nucleus. It catalyses the reaction ATP + H2O = ADP + phosphate + H(+). In terms of biological role, ATP-dependent rRNA helicase required for pre-ribosomal RNA processing. Involved in the maturation of the 35S-pre-rRNA and to its cleavage to mature 18S rRNA. The chain is ATP-dependent rRNA helicase rrp3 from Sclerotinia sclerotiorum (strain ATCC 18683 / 1980 / Ss-1) (White mold).